We begin with the raw amino-acid sequence, 905 residues long: MKSKEIRNKWLNFFESKGHLIIPSKSLIPIKDDSLLWINSGVATLKDFFSGKKIPPSKRLTNSQKSIRTNDIENVGKTARHHTFFEMLGNFSIGDYFKKEAINFGFEFIFDVLKFDREKIFFTYFSEDLETLEILKSLNVPDSQIIKGSRKTNFWDMGNGPCGPNLEIFYDRGPKYSNRGIELLKNDIENDRYIEIWNIVFSQFNNDGNGNYELLKQKNIDTGAGLERLACILQDTPTNFETDLFLPIIKEIEKLSIYKYKIDNYFLKDKIQEKINLNFKIISDHLRTAVNAINDGAKPSNNGRGYIIRRLIRRAYRSGIFLGIKGKSFLHKMTQIVRDSLIYDIDVEKVSKIIKKEEEMFSKTISEGINLLKEKIKSKFPKDNSIDIENKSQVAKYFKENNLTFDFSIAFELFSTFGFPVEIIKEILEDEYEIELDISNLPKYLEEHANKSRSENSSAMQKVINSLELVKEKVSEFVGYSTLKTKSKILYLLNETEEIHFTNSENEISYLILDKTPFYATAGGQRHDKGLLIQDKNRIEVLEVFKDKHLNNVHKVKGKILKSELINAEVDSNIRIGLERNHSGTHLVFNALSREFGKEIEQLGSDNNEERLTFDFPLSKKPSWEEIKNVEKRVNEYINMSVDREYIITTLEGAKKLNAVMTLEEQEYMDPNEVRIVNFPKITADLCGGTHIENTKKIETFKIISLDSKGKNKFRIKAITSKKIVEEYLKDEISKNKLVLENLIEKNKSLFQGYKMNFSWSKNLDEQNEQITKHIDQARSDYKKLLKNSENKLEKLESDFSIMKFKNTEIIFDMNLKMASLQSLVATLREKNPKAIVILGSEISKGKFFICVGSKEFSAKDISNIIFEKYKGKGGGNNILSQGSIDKKIEKAEDLFELLKEKGII.

Residues His-582, His-586, Cys-687, and His-691 each contribute to the Zn(2+) site.

This sequence belongs to the class-II aminoacyl-tRNA synthetase family. Requires Zn(2+) as cofactor.

The protein localises to the cytoplasm. It carries out the reaction tRNA(Ala) + L-alanine + ATP = L-alanyl-tRNA(Ala) + AMP + diphosphate. Functionally, catalyzes the attachment of alanine to tRNA(Ala) in a two-step reaction: alanine is first activated by ATP to form Ala-AMP and then transferred to the acceptor end of tRNA(Ala). Also edits incorrectly charged Ser-tRNA(Ala) and Gly-tRNA(Ala) via its editing domain. The protein is Alanine--tRNA ligase of Mycoplasma mobile (strain ATCC 43663 / 163K / NCTC 11711) (Mesomycoplasma mobile).